The chain runs to 326 residues: Pyruvate dehydrogenase E1 component subunit beta (326 aa).

Glutamate 62 lines the thiamine diphosphate pocket.

In terms of assembly, heterodimer of an alpha and a beta chain. The cofactor is thiamine diphosphate.

The catalysed reaction is N(6)-[(R)-lipoyl]-L-lysyl-[protein] + pyruvate + H(+) = N(6)-[(R)-S(8)-acetyldihydrolipoyl]-L-lysyl-[protein] + CO2. The pyruvate dehydrogenase complex catalyzes the overall conversion of pyruvate to acetyl-CoA and CO(2). It contains multiple copies of three enzymatic components: pyruvate dehydrogenase (E1), dihydrolipoamide acetyltransferase (E2) and lipoamide dehydrogenase (E3). This is Pyruvate dehydrogenase E1 component subunit beta (pdhB) from Mycoplasma genitalium (strain ATCC 33530 / DSM 19775 / NCTC 10195 / G37) (Mycoplasmoides genitalium).